A 295-amino-acid polypeptide reads, in one-letter code: Bifunctional protein FolD (295 aa).

Residues 166–168, serine 191, and isoleucine 232 each bind NADP(+); that span reads GRS.

The protein belongs to the tetrahydrofolate dehydrogenase/cyclohydrolase family. Homodimer.

It carries out the reaction (6R)-5,10-methylene-5,6,7,8-tetrahydrofolate + NADP(+) = (6R)-5,10-methenyltetrahydrofolate + NADPH. The enzyme catalyses (6R)-5,10-methenyltetrahydrofolate + H2O = (6R)-10-formyltetrahydrofolate + H(+). It participates in one-carbon metabolism; tetrahydrofolate interconversion. Functionally, catalyzes the oxidation of 5,10-methylenetetrahydrofolate to 5,10-methenyltetrahydrofolate and then the hydrolysis of 5,10-methenyltetrahydrofolate to 10-formyltetrahydrofolate. The chain is Bifunctional protein FolD from Rhodopseudomonas palustris (strain BisB18).